Reading from the N-terminus, the 203-residue chain is Holliday junction branch migration complex subunit RuvA (203 aa).

The tract at residues 1–61 (MIIYKYGKIM…EYTKVTYGFD (61 aa)) is domain I. Residues 62 to 139 (NFKELVIFED…KFMKKLTSDE (78 aa)) are domain II. The flexible linker stretch occupies residues 140 to 147 (AAKIKVPA). Positions 147-203 (ASSENENKFLDTMKMLGFKQQQIKFALDKIELNDDIETCVENAIKLISQQQHETSRV) are domain III.

This sequence belongs to the RuvA family. As to quaternary structure, homotetramer. Forms an RuvA(8)-RuvB(12)-Holliday junction (HJ) complex. HJ DNA is sandwiched between 2 RuvA tetramers; dsDNA enters through RuvA and exits via RuvB. An RuvB hexamer assembles on each DNA strand where it exits the tetramer. Each RuvB hexamer is contacted by two RuvA subunits (via domain III) on 2 adjacent RuvB subunits; this complex drives branch migration. In the full resolvosome a probable DNA-RuvA(4)-RuvB(12)-RuvC(2) complex forms which resolves the HJ.

Its subcellular location is the cytoplasm. The RuvA-RuvB-RuvC complex processes Holliday junction (HJ) DNA during genetic recombination and DNA repair, while the RuvA-RuvB complex plays an important role in the rescue of blocked DNA replication forks via replication fork reversal (RFR). RuvA specifically binds to HJ cruciform DNA, conferring on it an open structure. The RuvB hexamer acts as an ATP-dependent pump, pulling dsDNA into and through the RuvAB complex. HJ branch migration allows RuvC to scan DNA until it finds its consensus sequence, where it cleaves and resolves the cruciform DNA. This is Holliday junction branch migration complex subunit RuvA from Metamycoplasma arthritidis (strain 158L3-1) (Mycoplasma arthritidis).